A 430-amino-acid chain; its full sequence is MGQSVVVLGAQWGDEGKGKIVDLLTEEIGAVVRFQGGHNAGHTLVINGKKTVLHLIPSGILRNGVLCLIGNGVVISPAALRKEIEELEDTGLEIRSRLKISPAAPLIMEYHIALDQAREKAAGGRAIGTTGRGIGPAYEDKVGRRGIRVADLHYPDQLAEKLRAALDYHNFVLTRYFGVDGMDFQRIYDEMLVFAEYVEPMKSDVAGILHDLRKQGKRVLFEGAQGTLLDIDHGTYPYVTSSSTTVGGALSGAGVGVQDIDYVLGIAKAYATRVGGGPFPTELDDKIGQGIRDRGVEYGASTGRPRRCGWMDIVALKRAVAINGITGLCITKLDVLDGMDKLKICIAYEYHDKRSEYAPLDAQGWEECTPVYLEFPGWNESTHGITSWEKLPPAARAYLCALEELAGCPIGIVSTGPDREHTIMLHDPFA.

Residues 13-19 and 41-43 each bind GTP; these read GDEGKGK and GHT. Asp-14 (proton acceptor) is an active-site residue. The Mg(2+) site is built by Asp-14 and Gly-41. IMP is bound by residues 14-17, 39-42, Thr-130, Arg-144, Gln-225, Thr-240, and Arg-304; these read DEGK and NAGH. The Proton donor role is filled by His-42. A substrate-binding site is contributed by 300 to 306; that stretch reads ASTGRPR. GTP-binding positions include Arg-306, 332–334, and 414–416; these read KLD and STG.

This sequence belongs to the adenylosuccinate synthetase family. As to quaternary structure, homodimer. The cofactor is Mg(2+).

It is found in the cytoplasm. The catalysed reaction is IMP + L-aspartate + GTP = N(6)-(1,2-dicarboxyethyl)-AMP + GDP + phosphate + 2 H(+). The protein operates within purine metabolism; AMP biosynthesis via de novo pathway; AMP from IMP: step 1/2. Its function is as follows. Plays an important role in the de novo pathway of purine nucleotide biosynthesis. Catalyzes the first committed step in the biosynthesis of AMP from IMP. The chain is Adenylosuccinate synthetase from Xylella fastidiosa (strain M12).